Here is a 934-residue protein sequence, read N- to C-terminus: Intimin (934 aa).

The N-terminal stretch at Met-1 to Ala-39 is a signal peptide. Residues Asn-40–Thr-153 form a peptidoglycan-binding region. A sufficient for homodimerization region spans residues Asn-40 to Thr-153. The segment at Asn-40 to Thr-212 is required for periplasmic localization. The region spanning Leu-63–Leu-112 is the LysM domain. The interval Tyr-210–Phe-411 is inverse autotransporter. The signature sequence for beta-barrel assembly machinery (BAM), which recognizes the unfolded beta-barrel in the periplasm stretch occupies residues Leu-402 to Phe-411. Residues Leu-437–Lys-449 are minimum linker residues necessary for formation of a heat-modifiable beta-barrel. Big-1 domains follow at residues Val-560–Phe-653 and Ile-660–Phe-753. An intimin receptor Tir-binding region spans residues Ala-747–Glu-934. Residues Ala-787–Ser-833 enclose the BIG2 domain. A disulfide bond links Cys-858 and Cys-932.

Belongs to the intimin/invasin family. Homodimer. Interacts with Tir.

The protein localises to the cell outer membrane. In terms of biological role, an inverse autotransporter. Adhesin, which mediates attachment to the human intestine epithelial cells. Necessary for the production of attaching and effacing lesions on infected human tissue culture cells. Anchored to the outer membrane by binding to peptidoglycan (PGN) via its periplasmic domain, thus helping in receptor interactions during host invasion. PGN-binding may also aid in resisting mechanical and chemical stress during transit of the bacterium through the gastrointestinal tract of the host. This Escherichia coli O157:H7 protein is Intimin.